Consider the following 288-residue polypeptide: Fructose-bisphosphate aldolase (288 aa).

A D-glyceraldehyde 3-phosphate-binding site is contributed by Ser-49. Asp-84 acts as the Proton donor in catalysis. Zn(2+)-binding residues include His-85, Asp-105, Glu-135, and His-177. Gly-178 lines the dihydroxyacetone phosphate pocket. Zn(2+) is bound at residue His-206. Residues 207-209 (GGS) and 228-231 (NINT) each bind dihydroxyacetone phosphate.

It belongs to the class II fructose-bisphosphate aldolase family. In terms of assembly, homodimer. It depends on Zn(2+) as a cofactor.

It catalyses the reaction beta-D-fructose 1,6-bisphosphate = D-glyceraldehyde 3-phosphate + dihydroxyacetone phosphate. Its pathway is carbohydrate degradation; glycolysis; D-glyceraldehyde 3-phosphate and glycerone phosphate from D-glucose: step 4/4. Its function is as follows. Catalyzes the aldol condensation of dihydroxyacetone phosphate (DHAP or glycerone-phosphate) with glyceraldehyde 3-phosphate (G3P) to form fructose 1,6-bisphosphate (FBP) in gluconeogenesis and the reverse reaction in glycolysis. The chain is Fructose-bisphosphate aldolase (fba) from Mycoplasma genitalium (strain ATCC 33530 / DSM 19775 / NCTC 10195 / G37) (Mycoplasmoides genitalium).